A 65-amino-acid polypeptide reads, in one-letter code: Small, acid-soluble spore protein C3 (65 aa).

This sequence belongs to the alpha/beta-type SASP family.

SASP are bound to spore DNA. They are double-stranded DNA-binding proteins that cause DNA to change to an a-like conformation. They protect the DNA backbone from chemical and enzymatic cleavage and are thus involved in dormant spore's high resistance to UV light. In Priestia megaterium (Bacillus megaterium), this protein is Small, acid-soluble spore protein C3 (SASP-C3).